The chain runs to 174 residues: Protein TM_1551 (174 aa).

In terms of domain architecture, AMMECR1 spans 2-174; sequence IGEHPYVKWA…IYRFTVERYK (173 aa).

The chain is Protein TM_1551 from Thermotoga maritima (strain ATCC 43589 / DSM 3109 / JCM 10099 / NBRC 100826 / MSB8).